Here is a 430-residue protein sequence, read N- to C-terminus: POU domain, class 2, transcription factor 3 (430 aa).

Disordered regions lie at residues 1–40 (MVNL…NGLD), 60–81 (HRPC…SGDM), 129–180 (LLLP…EPTD), and 248–267 (DAES…YPTL). 2 stretches are compositionally biased toward polar residues: residues 23-32 (ARSTFGQVES) and 67-78 (QGPTMMPGNQMS). Residues 129 to 139 (LLLPQTGPGLT) are compositionally biased toward low complexity. The POU-specific domain maps to 176 to 250 (DEPTDLEELE…LLEKWLNDAE (75 aa)). Low complexity predominate over residues 251 to 267 (SSPSDPSASTPSSYPTL). The homeobox DNA-binding region spans 274–333 (KRKKRTSIETNIRLTLEKRFQDNPKPSSEEISMIAEQLSMEKEVVRVWFCNRRQKEKRIN). Low complexity-rich tracts occupy residues 355–364 (SLGSLSVPPV) and 374–390 (SSCS…PGSG). The segment at 355–413 (SLGSLSVPPVHSTMPGTVTSSCSPGNNSRPSSPGSGLHASSPTASQNNSKAAMNPSSAA) is disordered. Residues 392–413 (HASSPTASQNNSKAAMNPSSAA) are compositionally biased toward polar residues.

Belongs to the POU transcription factor family. Class-2 subfamily. As to quaternary structure, interacts (via the POU domain) with POU2AF1 and POU2AF2 in a DNA-dependent manner; this interaction recruits POU2AF2 to chromatin and increases POU2F3 transactivation activity. As to expression, expressed in epidermis and hair follicles.

It localises to the nucleus. In terms of biological role, transcription factor that binds to the octamer motif (5'-ATTTGCAT-3') and regulates cell type-specific differentiation pathways. Involved in the regulation of keratinocytes differentiation. The POU2F3-POU2AF2/POU2AF3 complex drives the expression of tuft-cell-specific genes, a rare chemosensory cells that coordinate immune and neural functions within mucosal epithelial tissues. Functionally, inhibits transactivation by POU2F1. This Rattus norvegicus (Rat) protein is POU domain, class 2, transcription factor 3 (Pou2f3).